Consider the following 427-residue polypeptide: MTWFIDRRLNGKNKSMVNRQRFLRRYKAQIKQSISEAINKRSVTDVDSGESVSIPTEDISEPMFHQGRGGLRHRVHPGNDHFVQNDRIERSQGGGGGSGSGQGQASQDGEGQDEFVFQISKDEYLDLLFEDLALPNLKQNQQRQLTEYKTHRAGYTANGVPANISVVRSLQNSLARRTAMTAGKRRELHALEENLAIISNSEPAQLLEEERLRKEIAELRAKIERVPFIDTFDLRYKNYEKRPDPSSQAVMFCLMDVSGSMDQSTKDMAKRFYILLYLFLSRTYKNVEVVYIRHHTQAKEVDEHEFFYSQETGGTIVSSALKLMDEVVKERYNPAQWNIYAAQASDGDNWADDSPLCHEILAKKLLPVVRYYSYIEITRRAHQTLWREYEHLQSTFDNFAMQHIRDQDDIYPVFRELFHKQNATAKD.

The segment at Arg-87–Glu-110 is disordered. A compositionally biased stretch (gly residues) spans Gln-92 to Gln-102.

This sequence belongs to the UPF0229 family.

This chain is UPF0229 protein YeaH, found in Escherichia coli O6:K15:H31 (strain 536 / UPEC).